The primary structure comprises 514 residues: Type-2 serine--tRNA ligase (514 aa).

Ala313 provides a ligand contact to L-serine. A Zn(2+)-binding site is contributed by Cys315. Arg344 contributes to the L-serine binding site. Residues Arg344 to Glu346 and Arg355 to Val356 each bind ATP. Arg361–Glu363 contacts L-serine. Residues Glu363 and Cys470 each contribute to the Zn(2+) site. Residue Arg477 coordinates ATP.

It belongs to the class-II aminoacyl-tRNA synthetase family. Type-2 seryl-tRNA synthetase subfamily. In terms of assembly, homodimer. Requires Zn(2+) as cofactor.

It localises to the cytoplasm. It carries out the reaction tRNA(Ser) + L-serine + ATP = L-seryl-tRNA(Ser) + AMP + diphosphate + H(+). The enzyme catalyses tRNA(Sec) + L-serine + ATP = L-seryl-tRNA(Sec) + AMP + diphosphate + H(+). It functions in the pathway aminoacyl-tRNA biosynthesis; selenocysteinyl-tRNA(Sec) biosynthesis; L-seryl-tRNA(Sec) from L-serine and tRNA(Sec): step 1/1. Functionally, catalyzes the attachment of serine to tRNA(Ser). Is also able to aminoacylate tRNA(Sec) with serine, to form the misacylated tRNA L-seryl-tRNA(Sec), which will be further converted into selenocysteinyl-tRNA(Sec). This Methanococcus maripaludis (strain DSM 14266 / JCM 13030 / NBRC 101832 / S2 / LL) protein is Type-2 serine--tRNA ligase (serS).